The chain runs to 145 residues: Allergen Sin a 1 (145 aa).

A disordered region spans residues 34 to 62 (SGSGPSWTLDDEFDFEDDMENPQGPQQRP). Residues 40-54 (WTLDDEFDFEDDMEN) constitute a propeptide that is removed on maturation. A compositionally biased stretch (acidic residues) spans 42 to 53 (LDDEFDFEDDME).

The protein belongs to the 2S seed storage albumins family. As to quaternary structure, the protein consists of two chains linked by disulfide bonds.

In terms of biological role, this is a 2S seed storage protein. In Sinapis alba (White mustard), this protein is Allergen Sin a 1.